Consider the following 440-residue polypeptide: Xylose isomerase (440 aa).

Catalysis depends on residues histidine 101 and aspartate 104. Residues glutamate 232, glutamate 268, histidine 271, aspartate 296, aspartate 307, aspartate 309, and aspartate 339 each contribute to the Mg(2+) site.

Belongs to the xylose isomerase family. As to quaternary structure, homotetramer. Mg(2+) is required as a cofactor.

The protein resides in the cytoplasm. It catalyses the reaction alpha-D-xylose = alpha-D-xylulofuranose. This is Xylose isomerase from Escherichia coli O157:H7.